The sequence spans 290 residues: Nucleoid occlusion protein (290 aa).

Residues 153 to 172 constitute a DNA-binding region (H-T-H motif); the sequence is EALAQRLGKGQSTIANKLRL.

This sequence belongs to the ParB family.

It is found in the cytoplasm. Its subcellular location is the nucleoid. In terms of biological role, effects nucleoid occlusion by binding relatively nonspecifically to DNA and preventing the assembly of the division machinery in the vicinity of the nucleoid, especially under conditions that disturb the cell cycle. It helps to coordinate cell division and chromosome segregation by preventing the formation of the Z ring through the nucleoid, which would cause chromosome breakage. The protein is Nucleoid occlusion protein of Bacillus cereus (strain G9842).